A 607-amino-acid polypeptide reads, in one-letter code: All-trans-retinol 13,14-reductase (607 aa).

An N-terminal signal peptide occupies residues 1–22; that stretch reads MWFAVVAIFLALVAFLYRYVVG.

It belongs to the carotenoid/retinoid oxidoreductase family. CrtISO subfamily. It depends on NAD(+) as a cofactor. The cofactor is NADP(+). Requires FAD as cofactor.

The protein localises to the endoplasmic reticulum membrane. It carries out the reaction all-trans-13,14-dihydroretinol + A = all-trans-retinol + AH2. In terms of biological role, catalyzes the saturation of all-trans-retinol to all-trans-13,14-dihydroretinol. In addition, saturates the 7-8 double bond of all-trans-retinol to produce all-trans-7,8-dihydroretinol. Can also use vitamin A2 (all-trans-3,4-didehydroretinol) as a substrate, to produce all-trans-13,14-dihydro-3,4-didehydroretinol or all-trans-7,8-dihydro-3,4-didehydroretinol. May play a role in vitamin A metabolism. This Danio rerio (Zebrafish) protein is All-trans-retinol 13,14-reductase.